Here is a 2108-residue protein sequence, read N- to C-terminus: General negative regulator of transcription subunit 1 (2108 aa).

Coiled coils occupy residues 795–813 (NVTLANLNNKVDELKKSLT) and 1021–1046 (MQQHQQQMLIYQQRQQQQQQRQQQQQ). Positions 1323–1352 (QQQQLQKSRLNQPSQSAQPPGVNVPNPQGG) are disordered. Polar residues predominate over residues 1329-1339 (KSRLNQPSQSA). Residues 1340 to 1352 (QPPGVNVPNPQGG) are compositionally biased toward low complexity. T2102 bears the Phosphothreonine mark.

Belongs to the CNOT1 family. In terms of assembly, forms a NOT protein complex that comprises NOT1, NOT2, NOT3, NOT4 and NOT5. Subunit of the 1.0 MDa CCR4-NOT core complex that contains CCR4, CAF1, NOT1, NOT2, NOT3, NOT4, NOT5, CAF40 and CAF130. In the complex interacts with CCR4, POP2, NOT2, NOT4 and NOT5. The core complex probably is part of a less characterized 1.9 MDa CCR4-NOT complex.

It is found in the cytoplasm. It localises to the nucleus. Its function is as follows. Acts as a component of the CCR4-NOT core complex, which in the nucleus seems to be a general transcription factor, and in the cytoplasm the major mRNA deadenylase involved in mRNA turnover. The NOT protein subcomplex negatively regulates the basal and activated transcription of many genes. Preferentially affects TC-type TATA element-dependent transcription. Could directly or indirectly inhibit component(s) of the general transcription machinery. In Saccharomyces cerevisiae (strain ATCC 204508 / S288c) (Baker's yeast), this protein is General negative regulator of transcription subunit 1 (CDC39).